A 350-amino-acid polypeptide reads, in one-letter code: Quercetin 2,3-dioxygenase (350 aa).

The segment at 1–145 (DTSSLIVEDA…FYYLGTNATD (145 aa)) is cupin 1. Cu cation-binding residues include His66, His68, and Glu73. Substrate is bound at residue His66. A substrate-binding site is contributed by Glu73. Residues Asn90 and Asn109 are each glycosylated (N-linked (GlcNAc...) asparagine). Cu cation is bound at residue His112. Asn142 is a glycosylation site (N-linked (GlcNAc...) asparagine). The segment at 146 to 205 (TTHTPYIPSSSDSSSTTGPDSSTISTLQSFDVYAELSFTPRTDTVNGTAPANTVWHTGAN) is linker. A disordered region spans residues 148-167 (HTPYIPSSSDSSSTTGPDSS). Residues 152-167 (IPSSSDSSSTTGPDSS) are compositionally biased toward low complexity. Asn191 and Asn248 each carry an N-linked (GlcNAc...) asparagine glycan. The segment at 206–350 (ALASTAGDPY…WSSVSFPADW (145 aa)) is cupin 2.

As to quaternary structure, homodimer. Cu cation serves as cofactor. Post-translationally, the N-linked glycan at Asn-191 consists of Man(5)-GlcNAc(2).

The catalysed reaction is quercetin + O2 = 2-(3,4-dihydroxybenzoyloxy)-4,6-dihydroxybenzoate + CO. It functions in the pathway flavonoid metabolism; quercetin degradation. Inhibited by diethyldithiocarbamate and kojic acid. In terms of biological role, performs the first step in the degradation of the flavonoid quercetin by a dioxygenase reaction. The enzyme catalyzes the cleavage of the O-heteroaromatic ring of the flavonol quercetin yielding the depside 2-protocatechuoyl-phloroglucinol carboxylic acid and carbon monoxide. This involves the remarkable dioxygenolytic cleavage of two carbon-carbon bonds. In Aspergillus japonicus, this protein is Quercetin 2,3-dioxygenase.